The following is a 642-amino-acid chain: Sodium- and chloride-dependent neutral and basic amino acid transporter B(0+) (642 aa).

The Cytoplasmic portion of the chain corresponds to 1–44 (MDKLKCPSFFKCREKEKVSASSENFHVGENDENQDRGNWSKKSD). Helical transmembrane passes span 45-65 (YLLS…FPYL), 72-92 (GAFL…LFFL), and 110-130 (ILPL…FVTI). The Extracellular portion of the chain corresponds to 131-234 (YYNVIIAYSL…RSSGMNETGV (104 aa)). Residues Asn155, Asn163, Asn174, Asn189, Asn197, Asn202, and Asn230 are each glycosylated (N-linked (GlcNAc...) asparagine). A run of 2 helical transmembrane segments spans residues 235–255 (IVWY…AALF) and 261–281 (SGKV…ILLV). An N-linked (GlcNAc...) asparagine glycan is attached at Asn302. 7 helical membrane-spanning segments follow: residues 315–335 (AATQ…ALSS), 348–368 (IVVC…IFSI), 399–419 (LAQL…LLTL), 450–477 (ITLG…VHLI), 480–500 (FCAG…IIWI), 528–548 (CWFV…LVQF), and 563–583 (VALG…MAII). The Cytoplasmic segment spans residues 584 to 642 (KIIQAKGNIFQRLISCCRPASNWGPYLEQHRGERYKDMVDPKKEADHEIPTVSGSRKPE). The span at 622 to 632 (VDPKKEADHEI) shows a compositional bias: basic and acidic residues. Residues 622-642 (VDPKKEADHEIPTVSGSRKPE) are disordered.

This sequence belongs to the sodium:neurotransmitter symporter (SNF) (TC 2.A.22) family. SLC6A14 subfamily. In terms of tissue distribution, levels are highest in adult and fetal lung, in trachea and salivary gland. Lower levels detected in mammary gland, stomach and pituitary gland, and very low levels in colon, uterus, prostate and testis.

Its subcellular location is the membrane. It is found in the apical cell membrane. It catalyses the reaction glycine(out) + chloride(out) + 2 Na(+)(out) = glycine(in) + chloride(in) + 2 Na(+)(in). The enzyme catalyses L-leucine(out) + chloride(out) + 2 Na(+)(out) = L-leucine(in) + chloride(in) + 2 Na(+)(in). The catalysed reaction is L-glutamine(out) + chloride(out) + 2 Na(+)(out) = L-glutamine(in) + chloride(in) + 2 Na(+)(in). It carries out the reaction L-arginine(out) + chloride(out) + 2 Na(+)(out) = L-arginine(in) + chloride(in) + 2 Na(+)(in). It catalyses the reaction (R)-carnitine(out) + chloride(out) + 2 Na(+)(out) = (R)-carnitine(in) + chloride(in) + 2 Na(+)(in). The enzyme catalyses O-butanoyl-(R)-carnitine(out) + chloride(out) + 2 Na(+)(out) = O-butanoyl-(R)-carnitine(in) + chloride(in) + 2 Na(+)(in). The catalysed reaction is O-propanoyl-(R)-carnitine(out) + chloride(out) + 2 Na(+)(out) = O-propanoyl-(R)-carnitine(in) + chloride(in) + 2 Na(+)(in). It carries out the reaction L-isoleucine(out) + chloride(out) + 2 Na(+)(out) = L-isoleucine(in) + chloride(in) + 2 Na(+)(in). It catalyses the reaction L-methionine(out) + chloride(out) + 2 Na(+)(out) = L-methionine(in) + chloride(in) + 2 Na(+)(in). The enzyme catalyses L-valine(out) + chloride(out) + 2 Na(+)(out) = L-valine(in) + chloride(in) + 2 Na(+)(in). The catalysed reaction is L-alanine(out) + chloride(out) + 2 Na(+)(out) = L-alanine(in) + chloride(in) + 2 Na(+)(in). It carries out the reaction L-serine(out) + chloride(out) + 2 Na(+)(out) = L-serine(in) + chloride(in) + 2 Na(+)(in). It catalyses the reaction L-cysteine(out) + chloride(out) + 2 Na(+)(out) = L-cysteine(in) + chloride(in) + 2 Na(+)(in). The enzyme catalyses L-asparagine(out) + chloride(out) + 2 Na(+)(out) = L-asparagine(in) + chloride(in) + 2 Na(+)(in). The catalysed reaction is L-threonine(out) + chloride(out) + 2 Na(+)(out) = L-threonine(in) + chloride(in) + 2 Na(+)(in). It carries out the reaction L-phenylalanine(out) + chloride(out) + 2 Na(+)(out) = L-phenylalanine(in) + chloride(in) + 2 Na(+)(in). It catalyses the reaction L-tryptophan(out) + chloride(out) + 2 Na(+)(out) = L-tryptophan(in) + chloride(in) + 2 Na(+)(in). The enzyme catalyses L-tyrosine(out) + chloride(out) + 2 Na(+)(out) = L-tyrosine(in) + chloride(in) + 2 Na(+)(in). The catalysed reaction is L-histidine(out) + chloride(out) + 2 Na(+)(out) = L-histidine(in) + chloride(in) + 2 Na(+)(in). It carries out the reaction L-lysine(out) + chloride(out) + 2 Na(+)(out) = L-lysine(in) + chloride(in) + 2 Na(+)(in). It catalyses the reaction beta-alanine(out) + chloride(out) + 2 Na(+)(out) = beta-alanine(in) + chloride(in) + 2 Na(+)(in). Amino acid transporter that plays an important role in the absorption of amino acids in the intestinal tract. Mediates the uptake of a broad range of neutral and cationic amino acids (with the exception of proline) in a Na(+)/Cl(-)-dependent manner. Transports non-alpha-amino acids such as beta-alanine with low affinity, and has a higher affinity for dipolar and cationic amino acids such as leucine and lysine. Can also transport carnitine, butirylcarnitine and propionylcarnitine coupled to the transmembrane gradients of Na(+) and Cl(-). The chain is Sodium- and chloride-dependent neutral and basic amino acid transporter B(0+) from Homo sapiens (Human).